A 222-amino-acid polypeptide reads, in one-letter code: Ribonuclease 3 (222 aa).

An N-terminal signal peptide occupies residues 1 to 19 (MKFFIFILALQQLYVQSFA). Gln30 is a binding site for RNA. A disulfide bond links Cys36 and Cys42. Residues His57, Phe107, 110–111 (HE), and 114–115 (KH) each bind RNA. The Proton donor role is filled by His57. 3 disulfide bridges follow: Cys72-Cys118, Cys178-Cys213, and Cys194-Cys205. Residue Glu111 is part of the active site. His115 (proton acceptor) is an active-site residue.

Belongs to the RNase T2 family.

It catalyses the reaction a ribonucleotidyl-ribonucleotide-RNA + H2O = a 3'-end 3'-phospho-ribonucleotide-RNA + a 5'-end dephospho-ribonucleoside-RNA + H(+). Its function is as follows. May remobilize phosphate, particularly when cells senesce or when phosphate becomes limiting. The chain is Ribonuclease 3 (RNS3) from Arabidopsis thaliana (Mouse-ear cress).